A 1070-amino-acid chain; its full sequence is MLVDGKGGITTIPGLNQIQLEGFCRFIDQGLMEELSKFQKIEDIDQEIEFQLFVETYQLVEPLIKERDAVYDSLTYSSELYVSAGLIRKASKDMQEQTIFIGSLPIMNSLGTFIVNGIYRIVINQILQSPGIYYRSELDQNGISVYTGTIISDWGGRLELEIDRKARVWARVSRKQKISILVLLSAMGLNLREILENVCYPEILLSFLRDKEKKKIGSKENAILEFYKKFACVGGDPLFSESLCKELQNKFFQQRCELGRIGRRNMNRRLHLDIPHNNTFLLPRDILEATDHLIGLKFGMGTLDDMNHLQNKRIRSVADLLQDQFGLALVRLENAVQGTLCGAIRHKRIPTPQNLVTSTLLTTTYESFFGLHPLSQVLDGTNPLTQIVHARKVSSLGPGGLTGRTASFRIRDIHPSHYGRICPIDTSEGINVGLIGSLAIHVRIGNWGSLESPFYEISDRLTGVRVLHLSPGRDEYYMVAAGNSLALNQDIQEDQVVPARYRQEFLTIAWEQVNLRSIFPFQYFSIGASLIPFIEHNDANRALMSSNMQRQAVPLTWSEKCIVGTGMERQAALDSGSLAIAEREGRVIYTDTEKILVSGDGKTINIPLVMYQRSNKNTCMYQQPQVRRGQFIKKGQILAGGAATVEGELALGKSVLVAYMPWEGYNFEDAVLISECLVYEDIFTSFHIKKYEIQIHMTTQGPEKVTNEIPHLEAHLIRNLDKNGIVLQGSWVEPGDVLVGKLTPQVVKESAYAPEDRLLRAILGIPVSASKETCLKVPIGARGRVIDVRWIQKKGGYGYNPEKIRVYILQKREIKVGDKVAGRHGNKGIISKILPRQDMPYLQDGRSVDLVFNPLGVPSRMNVGQIFECSLGLAGSLLDRHYRIAPFDERYEQEASRKIVFSELYEASKQTANPWAFEPEYPGKSRIFDGRTGKTFEHPVLIGKPYILKLIHQVDDKIHGRSIGHYALVTQQPLRGRAKQGGQRVGEMEVWALEGFGVAHILQEMLTYKSDHIRARQEVLGTTIVGGTIPSPKNAPESFRLLVRELRSLALELTHFLVSEKNFQVNRKEA.

It belongs to the RNA polymerase beta chain family. In plastids the minimal PEP RNA polymerase catalytic core is composed of four subunits: alpha, beta, beta', and beta''. When a (nuclear-encoded) sigma factor is associated with the core the holoenzyme is formed, which can initiate transcription.

It is found in the plastid. The enzyme catalyses RNA(n) + a ribonucleoside 5'-triphosphate = RNA(n+1) + diphosphate. In terms of biological role, DNA-dependent RNA polymerase catalyzes the transcription of DNA into RNA using the four ribonucleoside triphosphates as substrates. The protein is DNA-directed RNA polymerase subunit beta (rpoB) of Cuscuta reflexa (Southern Asian dodder).